A 210-amino-acid chain; its full sequence is Ribosomal RNA small subunit methyltransferase G (210 aa).

S-adenosyl-L-methionine is bound by residues glycine 80, leucine 85, 131 to 132 (VE), and arginine 146.

Belongs to the methyltransferase superfamily. RNA methyltransferase RsmG family.

It is found in the cytoplasm. It catalyses the reaction guanosine(527) in 16S rRNA + S-adenosyl-L-methionine = N(7)-methylguanosine(527) in 16S rRNA + S-adenosyl-L-homocysteine. Specifically methylates the N7 position of guanine in position 527 of 16S rRNA. The chain is Ribosomal RNA small subunit methyltransferase G from Pasteurella multocida (strain Pm70).